The chain runs to 317 residues: Transcription factor EC (317 aa).

The tract at residues 1 to 90 (MTLDHRLFSQ…GLMNASCPSI (90 aa)) is necessary for transcriptional transactivation. The region spanning 110-163 (QKKDNHNLIERRRRYNINYRIKELGTLIPKSNDPDIRWNKGTILKASVDYIKWL) is the bHLH domain. The segment at 242–317 (TSPEFYEQAV…SLSSEDGDEL (76 aa)) is necessary for transcriptional transactivation.

It belongs to the MiT/TFE family. As to quaternary structure, homodimer. Forms heterodimers with TFE3. Forms heterodimers with MITF. Interacts with MITF. As to expression, expressed in kidney, spleen, lung, liver, testis and muscle.

It is found in the nucleus. Its function is as follows. Transcriptional regulator that acts as a repressor or an activator. Acts as a transcriptional repressor on minimal promoter containing mu E3 enhancer sequence. Binds to mu E3 DNA sequence of the immunoglobulin heavy-chain gene enhancer. Acts as a transcriptional transactivator on the proximal promoter region of the tartrate-resistant acid phosphatase (TRAP) E-box containing promoter. Collaborates with MITF in target gene activation. Acts as a transcriptional repressor on minimal promoter containing mu E3 enhancer sequence. Binds to mu E3 DNA sequence of the immunoglobulin heavy-chain gene enhancer. Binds DNA in a homo- or heterodimeric form. In Rattus norvegicus (Rat), this protein is Transcription factor EC (Tfec).